A 284-amino-acid polypeptide reads, in one-letter code: uncharacterized protein (284 aa).

Position 54 (glutamine 54) interacts with FMN. The Proton donor role is filled by cysteine 83. FMN-binding positions include lysine 125, histidine 153, 183–185 (NGG), and 207–208 (AN).

It belongs to the Dus family. FMN is required as a cofactor.

Catalyzes the synthesis of dihydrouridine, a modified base found in the D-loop of most tRNAs. This is an uncharacterized protein from Caenorhabditis elegans.